A 557-amino-acid chain; its full sequence is MTNTSYEKLVEVYEKISSTSSRLEKQDIIADFLMYIKETDADITYDITLLLQGKIFPPWSDKEMGISTQLIIKALSNLLGESTKSIENKLAEVGDMGEISEELIKNNKQVTFFKVPLTVKKVLSNLRKTESITGSKSQNKKINYLLELYTSASPLEAKYITRTITERLRIGVGEGTLVEAIAQAYNIDKEIIDRAYMLSNDLGEVASRAQESIESVKSLTITPGKPIKPMLAQLSPGIKESITEMKKVICETKYDGIRVQIHHYNNKTKIFTRRLENVTNALPEVVEYIEEALPSKDFIVEGEVIATKDNKPISFQYILQRVKRKYDIDKMREKIPLKVFLFDVLYYDKPTAELPIIQRRQLLEEIVTTSKNVELSTMKIVSQENYTEAEKLFTWSIDEGHEGIMFKDVTSPYSPGKRGKNMLKYKPLRETLDCVITGGTYGKGKRAKFFGSYLLSLLDEKTGEYKTLVHAATGMDDDLLASLTKRMEKLIISKSEQNVLFKPKVILEIAYSEIVESNEYESGYSLRFPAIKGVRDDIGLDEVDTLSKLHQMIDLQK.

Glu251 is a binding site for ATP. Lys253 serves as the catalytic N6-AMP-lysine intermediate. Residues Arg258, Arg273, Glu303, Phe342, Arg418, and Lys424 each contribute to the ATP site.

Belongs to the ATP-dependent DNA ligase family. It depends on Mg(2+) as a cofactor.

It carries out the reaction ATP + (deoxyribonucleotide)n-3'-hydroxyl + 5'-phospho-(deoxyribonucleotide)m = (deoxyribonucleotide)n+m + AMP + diphosphate.. Functionally, DNA ligase that seals nicks in double-stranded DNA during DNA replication, DNA recombination and DNA repair. The chain is DNA ligase from Methanosphaera stadtmanae (strain ATCC 43021 / DSM 3091 / JCM 11832 / MCB-3).